Consider the following 189-residue polypeptide: Elongation factor P (189 aa).

This sequence belongs to the elongation factor P family.

The protein resides in the cytoplasm. It participates in protein biosynthesis; polypeptide chain elongation. Involved in peptide bond synthesis. Stimulates efficient translation and peptide-bond synthesis on native or reconstituted 70S ribosomes in vitro. Probably functions indirectly by altering the affinity of the ribosome for aminoacyl-tRNA, thus increasing their reactivity as acceptors for peptidyl transferase. This Aster yellows witches'-broom phytoplasma (strain AYWB) protein is Elongation factor P.